A 377-amino-acid polypeptide reads, in one-letter code: N5-carboxyaminoimidazole ribonucleotide synthase (377 aa).

ATP is bound by residues Arg93, Lys133, 138–144, 175–178, Glu183, His206, and 257–258; these read GYDGRGQ, EEFV, and NE. The 191-residue stretch at 97 to 287 folds into the ATP-grasp domain; that stretch reads KTLLDHAGVR…QFENHLRAVC (191 aa).

It belongs to the PurK/PurT family. Homodimer.

It carries out the reaction 5-amino-1-(5-phospho-beta-D-ribosyl)imidazole + hydrogencarbonate + ATP = 5-carboxyamino-1-(5-phospho-D-ribosyl)imidazole + ADP + phosphate + 2 H(+). Its pathway is purine metabolism; IMP biosynthesis via de novo pathway; 5-amino-1-(5-phospho-D-ribosyl)imidazole-4-carboxylate from 5-amino-1-(5-phospho-D-ribosyl)imidazole (N5-CAIR route): step 1/2. Its function is as follows. Catalyzes the ATP-dependent conversion of 5-aminoimidazole ribonucleotide (AIR) and HCO(3)(-) to N5-carboxyaminoimidazole ribonucleotide (N5-CAIR). This chain is N5-carboxyaminoimidazole ribonucleotide synthase, found in Vibrio vulnificus (strain YJ016).